The primary structure comprises 676 residues: Palmitoyl-CoA ligase FUM16 (676 aa).

245-256 (IMYTSGSTGLPN) is an AMP binding site. The AMP-binding stretch occupies residues 552-655 (KLESIYRTSQ…SGLVTPTMKL (104 aa)).

It belongs to the ATP-dependent AMP-binding enzyme family.

Its subcellular location is the endoplasmic reticulum. It functions in the pathway mycotoxin biosynthesis. Functionally, palmitoyl-CoA ligase; part of the gene cluster that mediates the biosynthesis of fumonisins B1 (FB1), B2 (FB2), B3 (FB3), and B4 (FB4), which are carcinogenic mycotoxins. Plays a role in the synthesis of ceramide and is involved in self-protection from fumonisin B1 toxicity. The biosynthesis starts with the FUM1-catalyzed carbon chain assembly from one molecule of acetyl-CoA, eight molecules of malonyl-CoA, and two molecules of methionine (in S-adenosyl form). The C18 polyketide chain is released from the enzyme by a nucleophilic attack of a carbanion, which is derived from R-carbon of alanine by decarboxylation, on the carbonyl carbon of polyketide acyl chain. This step is catalyzed by the pyridoxal 5'-phosphate-dependent aminoacyl transferase FUM8. The resultant 3-keto intermediate is then stereospecifically reduced to a 3-hydroxyl product by reductase FUM13. Subsequent oxidations at C-10 by the cytochrome P450 monooxygenase FUM2, C-14 and C-15 by FUM6, FUM12 or FUM15, tricarballylic esterification of the hydroxyl groups on C-14 and C-15 by acyltransferase FUM14, and C-5 hydroxylation by 2-keto-glutarate-dependent dioxygenase FUM3 furnish the biosynthesis of fumonisins. The tricarballylic moieties are most likely derived from the citric acid cycle, and their addition to the carbon backbone may involve FUM7, FUM10, FUM11 and FUM14. This is Palmitoyl-CoA ligase FUM16 from Gibberella moniliformis (strain M3125 / FGSC 7600) (Maize ear and stalk rot fungus).